A 429-amino-acid polypeptide reads, in one-letter code: Glutamate-1-semialdehyde 2,1-aminomutase 2 (429 aa).

Lys268 carries the post-translational modification N6-(pyridoxal phosphate)lysine.

Belongs to the class-III pyridoxal-phosphate-dependent aminotransferase family. HemL subfamily. As to quaternary structure, homodimer. Pyridoxal 5'-phosphate is required as a cofactor.

Its subcellular location is the cytoplasm. The enzyme catalyses (S)-4-amino-5-oxopentanoate = 5-aminolevulinate. It participates in porphyrin-containing compound metabolism; protoporphyrin-IX biosynthesis; 5-aminolevulinate from L-glutamyl-tRNA(Glu): step 2/2. The chain is Glutamate-1-semialdehyde 2,1-aminomutase 2 from Bacillus mycoides (strain KBAB4) (Bacillus weihenstephanensis).